Reading from the N-terminus, the 369-residue chain is Queuine tRNA-ribosyltransferase (369 aa).

D89 serves as the catalytic Proton acceptor. Substrate contacts are provided by residues D89 to F93, D142, Q184, and G211. Residues G242 to L248 form an RNA binding region. Residue D261 is the Nucleophile of the active site. The interval T266–R270 is RNA binding; important for wobble base 34 recognition. Residues C299, C301, C304, and H330 each contribute to the Zn(2+) site.

This sequence belongs to the queuine tRNA-ribosyltransferase family. Homodimer. Within each dimer, one monomer is responsible for RNA recognition and catalysis, while the other monomer binds to the replacement base PreQ1. It depends on Zn(2+) as a cofactor.

It carries out the reaction 7-aminomethyl-7-carbaguanine + guanosine(34) in tRNA = 7-aminomethyl-7-carbaguanosine(34) in tRNA + guanine. Its pathway is tRNA modification; tRNA-queuosine biosynthesis. Catalyzes the base-exchange of a guanine (G) residue with the queuine precursor 7-aminomethyl-7-deazaguanine (PreQ1) at position 34 (anticodon wobble position) in tRNAs with GU(N) anticodons (tRNA-Asp, -Asn, -His and -Tyr). Catalysis occurs through a double-displacement mechanism. The nucleophile active site attacks the C1' of nucleotide 34 to detach the guanine base from the RNA, forming a covalent enzyme-RNA intermediate. The proton acceptor active site deprotonates the incoming PreQ1, allowing a nucleophilic attack on the C1' of the ribose to form the product. After dissociation, two additional enzymatic reactions on the tRNA convert PreQ1 to queuine (Q), resulting in the hypermodified nucleoside queuosine (7-(((4,5-cis-dihydroxy-2-cyclopenten-1-yl)amino)methyl)-7-deazaguanosine). In Thermotoga maritima (strain ATCC 43589 / DSM 3109 / JCM 10099 / NBRC 100826 / MSB8), this protein is Queuine tRNA-ribosyltransferase.